Consider the following 391-residue polypeptide: Na(+)/H(+) antiporter NhaA (391 aa).

Transmembrane regions (helical) follow at residues 14-34, 59-79, 95-115, 124-144, 154-174, 177-197, 213-233, 261-281, 287-307, 328-348, and 363-383; these read AGGI…NSPL, LLLW…GLEV, SLPT…YLFF, VGWA…MALL, VFLL…IALF, TDLS…LVAL, IILW…GVVI, FLIL…NVGF, PVPV…VLLF, IAPV…IASL, and IGIL…LSKV.

This sequence belongs to the NhaA Na(+)/H(+) (TC 2.A.33) antiporter family.

The protein resides in the cell inner membrane. It carries out the reaction Na(+)(in) + 2 H(+)(out) = Na(+)(out) + 2 H(+)(in). Functionally, na(+)/H(+) antiporter that extrudes sodium in exchange for external protons. This is Na(+)/H(+) antiporter NhaA from Shewanella amazonensis (strain ATCC BAA-1098 / SB2B).